The chain runs to 256 residues: Undecaprenyl-diphosphatase (256 aa).

7 helical membrane-spanning segments follow: residues Met1–Val21, Phe41–Phe61, Val69–Leu89, Leu96–Leu116, Val172–Asp192, Ala207–Leu227, and Phe233–Leu253.

The protein belongs to the UppP family.

It is found in the cell inner membrane. The catalysed reaction is di-trans,octa-cis-undecaprenyl diphosphate + H2O = di-trans,octa-cis-undecaprenyl phosphate + phosphate + H(+). Catalyzes the dephosphorylation of undecaprenyl diphosphate (UPP). Confers resistance to bacitracin. The protein is Undecaprenyl-diphosphatase of Wolinella succinogenes (strain ATCC 29543 / DSM 1740 / CCUG 13145 / JCM 31913 / LMG 7466 / NCTC 11488 / FDC 602W) (Vibrio succinogenes).